The sequence spans 264 residues: Thymidylate synthase (264 aa).

Position 21 (Arg-21) interacts with dUMP. His-51 is a (6R)-5,10-methylene-5,6,7,8-tetrahydrofolate binding site. 126-127 (RR) is a binding site for dUMP. Cys-146 (nucleophile) is an active-site residue. DUMP contacts are provided by residues 166 to 169 (RSAD), Asn-177, and 207 to 209 (HLY). Residue Asp-169 participates in (6R)-5,10-methylene-5,6,7,8-tetrahydrofolate binding. Ala-263 contacts (6R)-5,10-methylene-5,6,7,8-tetrahydrofolate.

It belongs to the thymidylate synthase family. Bacterial-type ThyA subfamily. As to quaternary structure, homodimer.

The protein localises to the cytoplasm. It catalyses the reaction dUMP + (6R)-5,10-methylene-5,6,7,8-tetrahydrofolate = 7,8-dihydrofolate + dTMP. The protein operates within pyrimidine metabolism; dTTP biosynthesis. In terms of biological role, catalyzes the reductive methylation of 2'-deoxyuridine-5'-monophosphate (dUMP) to 2'-deoxythymidine-5'-monophosphate (dTMP) while utilizing 5,10-methylenetetrahydrofolate (mTHF) as the methyl donor and reductant in the reaction, yielding dihydrofolate (DHF) as a by-product. This enzymatic reaction provides an intracellular de novo source of dTMP, an essential precursor for DNA biosynthesis. The polypeptide is Thymidylate synthase (Bdellovibrio bacteriovorus (strain ATCC 15356 / DSM 50701 / NCIMB 9529 / HD100)).